The primary structure comprises 708 residues: MLSTHHHQGNSSSSSSSSSPSQTIGGSDLSNISALPLPLPSIFTTAQNQMNPPILFPPTSSLLGGSSNTPSFLLPPSSIMSSNVFPSHDGQYPDMPNMVDQYQIHPNQNPHYNYQYQLMFMQQQAQQNQPPQQNQQQQHHQQQQQQPQHHQQMQQQQHHQQMQQQQQHHQQMQQQQHHQQMQHHQLQQHQHQHQQQQQQQQHQQQHHQQQQQQQQQHHQQQQHHQHSQPQQQHQHNQQQQHQHNQQQHQQQQNQIQMVPQQPQSLSNSGNNNNNNNNNNNSNNNNNNNNNNNSHQLNNLTLSQNNTSGSNTPSPSTKGKRKHHETSNSEKKDSSGQTIPKCTRCNEAASWKHDKRRWWCKECKKAFTPGITKMQQVPQQAQLQPLQNHNQIIPQLWDSQQNNSSQNTPPTQPQNNMNQINHQLLQQQHQQAQLQAHLNLTASNQQVPPQLQQQINGGLPNNNNSLITQNTLNSLSTSVSCPPCPLCRGISSWKHDKKRYFCKECKKPFTPVGAGLSPSSSPSSPKKKSNITPITTSSTSSSSSTPSIINNNNNNNANSSKNNTPKKQLSPPPSVLQSPSSSSISQSPLQLNYQTPTYSPNPSLPSIGGNLNSLANSIKPDGGILISGLSPPKSSSSLNNLNSFSNTGALLSSNGINLANLGNPLSQLNKKQKKRSDKDINDGGVQVLVSCVDTNVNNCSSIIPDGDSW.

2 disordered regions span residues 1-29 and 123-339; these read MLSTHHHQGNSSSSSSSSSPSQTIGGSDL and QQAQ…QTIP. 3 stretches are compositionally biased toward low complexity: residues 11–21, 123–219, and 227–316; these read SSSSSSSSSPS, QQAQ…QHHQ, and SQPQ…SPST. Over residues 324–333 the composition is skewed to basic and acidic residues; the sequence is ETSNSEKKDS. 2 consecutive repeat copies span residues 339 to 368 and 481 to 510. Residues 511 to 604 form a disordered region; that stretch reads VGAGLSPSSS…PTYSPNPSLP (94 aa). The span at 516–590 shows a compositional bias: low complexity; the sequence is SPSSSPSSPK…SSISQSPLQL (75 aa). Polar residues predominate over residues 591 to 600; that stretch reads NYQTPTYSPN.

It is found in the nucleus. In terms of biological role, cAMP-responsive transcriptional activator regulating late gene expression. Essential component of the developmental switch between early and late development. Binds to a number of CA/GT-rich gene regulatory elements. In Dictyostelium discoideum (Social amoeba), this protein is G-box-binding factor (gbfA).